Here is a 131-residue protein sequence, read N- to C-terminus: Small ribosomal subunit protein uS8 (131 aa).

It belongs to the universal ribosomal protein uS8 family. As to quaternary structure, part of the 30S ribosomal subunit. Contacts proteins S5 and S12.

In terms of biological role, one of the primary rRNA binding proteins, it binds directly to 16S rRNA central domain where it helps coordinate assembly of the platform of the 30S subunit. The protein is Small ribosomal subunit protein uS8 of Campylobacter jejuni subsp. doylei (strain ATCC BAA-1458 / RM4099 / 269.97).